The following is a 288-amino-acid chain: uncharacterized protein (288 aa).

4 helical membrane passes run 43-63 (LFTL…NYII), 190-210 (LFIF…FLLE), 243-263 (GIPI…SILI), and 265-285 (LLQM…NKSL).

Its subcellular location is the cell membrane. This is an uncharacterized protein from Rickettsia prowazekii (strain Madrid E).